Reading from the N-terminus, the 344-residue chain is N-acetyl-gamma-glutamyl-phosphate reductase (344 aa).

Residue Cys-150 is part of the active site.

Belongs to the NAGSA dehydrogenase family. Type 1 subfamily.

It is found in the cytoplasm. The enzyme catalyses N-acetyl-L-glutamate 5-semialdehyde + phosphate + NADP(+) = N-acetyl-L-glutamyl 5-phosphate + NADPH + H(+). It functions in the pathway amino-acid biosynthesis; L-arginine biosynthesis; N(2)-acetyl-L-ornithine from L-glutamate: step 3/4. Catalyzes the NADPH-dependent reduction of N-acetyl-5-glutamyl phosphate to yield N-acetyl-L-glutamate 5-semialdehyde. In Pseudomonas entomophila (strain L48), this protein is N-acetyl-gamma-glutamyl-phosphate reductase.